Reading from the N-terminus, the 218-residue chain is Large ribosomal subunit protein eL14 (218 aa).

An N6-acetyllysine modification is found at Lys79. Lys85 is subject to N6-acetyllysine; alternate. Lys85 bears the N6-succinyllysine; alternate mark. Lys124 participates in a covalent cross-link: Glycyl lysine isopeptide (Lys-Gly) (interchain with G-Cter in SUMO2). The residue at position 139 (Ser139) is a Phosphoserine. Positions Val159–Ala218 are disordered. 6 repeat units span residues Gln174–Ala178, Gln179–Ala183, Gln184–Gly188, Gln189–Gln193, Lys196–Gln198, and Lys199–Gln201. The interval Gln174–Gln193 is 4 X 5 AA tandem repeats of Q-K-A-[PAS]-X. Residues Lys196–Gln201 form a 2 X 3 AA tandem repeats of K-[GA]-Q region. At Lys207 the chain carries N6-succinyllysine.

This sequence belongs to the eukaryotic ribosomal protein eL14 family. In terms of assembly, component of the large ribosomal subunit.

Its subcellular location is the cytoplasm. Component of the large ribosomal subunit. The ribosome is a large ribonucleoprotein complex responsible for the synthesis of proteins in the cell. This chain is Large ribosomal subunit protein eL14 (RPL14), found in Oryctolagus cuniculus (Rabbit).